The primary structure comprises 152 residues: Large-conductance mechanosensitive channel (152 aa).

3 helical membrane passes run 14 to 34, 39 to 59, and 85 to 105; these read VVDMAVGIILGVAFGAIVKSL, LMPGIGILLGSADFSNLFLVI, and GLFINTIVNFIIVAFALFLVI.

It belongs to the MscL family. Homopentamer.

The protein localises to the cell inner membrane. In terms of biological role, channel that opens in response to stretch forces in the membrane lipid bilayer. May participate in the regulation of osmotic pressure changes within the cell. This chain is Large-conductance mechanosensitive channel, found in Syntrophus aciditrophicus (strain SB).